A 530-amino-acid chain; its full sequence is MEQARPIRRALLSVSDKTGILEFAKALNERGVALLSTGGTAKLLGDAGLPVTEVSDYTGFPEMMDGRVKTLHPKVHGGILGRRDQDDAIMAQHNIYPIDMVVVNLYPFAATVAKAGCSLADAVENIDIGGPTMVRSAAKNHKDVAIVVKAADYARVIAEMDANGNSLKLATRFDLAIAAFEHTAAYDGMIANYFGTMVPSYGDNKEGDAESRFPRTFNSQFIKKQDMRYGENSHQAAAFYAEEHATPGSVSSAIQLQGKALSYNNIADTDAALECVKEFSEPACVIVKHANPCGVAIGDDLLTAYDRAYQTDPTSAFGGIIAFNRELDGATAAAIVARQFVEVIIAPSVSQEARDVVAAKQNVRLLECGQWTAPAQGFDLKRVNGGLLIQERDFGMVTQGDLKVVSKRQPTEAELKDLLFCWKVAKFVKSNAIVYAKEGQTIGVGAGQMSRVYSAKIAGIKAEDEGLTVAGSVMASDAFFPFRDGIDAAAAAGISCVIQPGGSMRDQEVIDAADEHGMTMVFTNMRHFRH.

Residues 1–148 (MEQARPIRRA…KNHKDVAIVV (148 aa)) form the MGS-like domain.

The protein belongs to the PurH family.

The enzyme catalyses (6R)-10-formyltetrahydrofolate + 5-amino-1-(5-phospho-beta-D-ribosyl)imidazole-4-carboxamide = 5-formamido-1-(5-phospho-D-ribosyl)imidazole-4-carboxamide + (6S)-5,6,7,8-tetrahydrofolate. The catalysed reaction is IMP + H2O = 5-formamido-1-(5-phospho-D-ribosyl)imidazole-4-carboxamide. Its pathway is purine metabolism; IMP biosynthesis via de novo pathway; 5-formamido-1-(5-phospho-D-ribosyl)imidazole-4-carboxamide from 5-amino-1-(5-phospho-D-ribosyl)imidazole-4-carboxamide (10-formyl THF route): step 1/1. It functions in the pathway purine metabolism; IMP biosynthesis via de novo pathway; IMP from 5-formamido-1-(5-phospho-D-ribosyl)imidazole-4-carboxamide: step 1/1. This Aeromonas salmonicida (strain A449) protein is Bifunctional purine biosynthesis protein PurH.